A 144-amino-acid polypeptide reads, in one-letter code: Hexon-interlacing protein (144 aa).

Positions 106–133 form a coiled coil; the sequence is LTVMLAKLETLTAQLEELSQKVEELADA.

It belongs to the adenoviridae hexon-interlacing protein family. As to quaternary structure, homotrimer. Interacts with hexon protein; this interaction tethers the hexons together. Self-interacts with adjacent proteins. Interacts with kinesin light chain KLC1; this interaction leads to capsid disruption at the nuclear pore complex during virus entry into host cell.

It is found in the virion. It localises to the host nucleus. Its function is as follows. Structural component of the virion that acts as a cement protein on the capsid exterior and forms triskelion structures consisting of three molecules that stabilize three hexon trimers at the center of each icosahedral facet and fixes the peripentonal hexons. Dispensable for assembly. During virus entry, recruits the anterograde motor kinesin-1 to the capsid docked at the nuclear pore complex thereby subjecting the docked capsid to a pulling force. The resulting tension leads to capsid disruption, dispersion of capsid fragments toward cell periphery and eventually viral DNA entry into the host nucleus. This chain is Hexon-interlacing protein, found in Homo sapiens (Human).